Reading from the N-terminus, the 493-residue chain is 1-aminocyclopropane-1-carboxylate synthase CMW33 (493 aa).

Residue Lys279 is modified to N6-(pyridoxal phosphate)lysine.

This sequence belongs to the class-I pyridoxal-phosphate-dependent aminotransferase family. In terms of assembly, homodimer. Requires pyridoxal 5'-phosphate as cofactor.

The enzyme catalyses S-adenosyl-L-methionine = 1-aminocyclopropane-1-carboxylate + S-methyl-5'-thioadenosine + H(+). It participates in alkene biosynthesis; ethylene biosynthesis via S-adenosyl-L-methionine; ethylene from S-adenosyl-L-methionine: step 1/2. Functionally, catalyzes the formation of 1-aminocyclopropane-1-carboxylate, a direct precursor of ethylene in higher plants. In Cucurbita maxima (Pumpkin), this protein is 1-aminocyclopropane-1-carboxylate synthase CMW33 (ACS1).